Reading from the N-terminus, the 221-residue chain is Putative N-acetylmannosamine-6-phosphate 2-epimerase (221 aa).

It belongs to the NanE family.

It catalyses the reaction an N-acyl-D-glucosamine 6-phosphate = an N-acyl-D-mannosamine 6-phosphate. It functions in the pathway amino-sugar metabolism; N-acetylneuraminate degradation; D-fructose 6-phosphate from N-acetylneuraminate: step 3/5. Functionally, converts N-acetylmannosamine-6-phosphate (ManNAc-6-P) to N-acetylglucosamine-6-phosphate (GlcNAc-6-P). The chain is Putative N-acetylmannosamine-6-phosphate 2-epimerase from Clostridium perfringens (strain ATCC 13124 / DSM 756 / JCM 1290 / NCIMB 6125 / NCTC 8237 / Type A).